A 453-amino-acid polypeptide reads, in one-letter code: Cholesterol 7-desaturase nvd (453 aa).

The helical transmembrane segment at 53–73 (IVEYILILTLMFAFSAILYVI) threads the bilayer. The 104-residue stretch at 126–229 (WFAVAETREL…VVETDGAIWI (104 aa)) folds into the Rieske domain. Residues Cys167, His169, Cys187, and His190 each contribute to the [2Fe-2S] cluster site.

It belongs to the cholesterol 7-desaturase family. [2Fe-2S] cluster serves as cofactor.

The protein resides in the membrane. The catalysed reaction is cholesterol + NADPH + O2 + H(+) = 7-dehydrocholesterol + NADP(+) + 2 H2O. It carries out the reaction cholesterol + NADH + O2 + H(+) = 7-dehydrocholesterol + NAD(+) + 2 H2O. It functions in the pathway steroid hormone biosynthesis; dafachronic acid biosynthesis. Its function is as follows. Catalyzes the production of 7-dehydrocholesterol (7-DHC or cholesta-5,7-dien-3beta-ol) by inserting a double bond (desaturating) at the C7-C8 single bond of cholesterol. Essential regulator of steroid biosynthesis as this reaction is the first step in the synthesis of the steroid hormone Delta(7)-dafachronic acid. This is Cholesterol 7-desaturase nvd from Bombyx mori (Silk moth).